The sequence spans 450 residues: MGAPPGYRPSAWVHLLHQLPRADFQLRPVPSGFAPRDQEYQQALLLVAALAGLGLGLSLIFIAVYLIRFCCCRPPEPHGAKSPPPGGGCVTWSCIAALLVGCAGIGIGFYGNSETSDGVSQLSSALLHANHTLSTIDDVVLETVERLGEAVKTELTTLEEVLSVRMELVAATRGARRQAEAAAQYLQGLAFWQGVSLSPVQVAEDVTFVEEYRWLAYVLLLLLVLLVCLFTLLGLAKQSKWLVVVMTAMSLLVLVLSWGSMGLEAATAVGLSDFCSNPDTYVLNLTQEETGLSSDILSYYFLCNQAVSNPFQQRLTLSQRALASIHSQLQGLEREAIPQFSAAQKPLLSLEETLNVTERSFHQLVALLHCRSLHKDYGSALRGLCEDALEGLLFLMLFSLLSAGALATTLCSLPRAWALFPPSDDYDDTDDDDPFNPQESKRFVQWQSSI.

Residues 1–43 (MGAPPGYRPSAWVHLLHQLPRADFQLRPVPSGFAPRDQEYQQA) lie on the Extracellular side of the membrane. Residues 44 to 64 (LLLVAALAGLGLGLSLIFIAV) traverse the membrane as a helical segment. Residues 65–88 (YLIRFCCCRPPEPHGAKSPPPGGG) are Cytoplasmic-facing. A helical transmembrane segment spans residues 89–109 (CVTWSCIAALLVGCAGIGIGF). Residues 110–214 (YGNSETSDGV…DVTFVEEYRW (105 aa)) are Extracellular-facing. Residue Asn130 is glycosylated (N-linked (GlcNAc...) asparagine). The helical transmembrane segment at 215–235 (LAYVLLLLLVLLVCLFTLLGL) threads the bilayer. Residues 236-240 (AKQSK) are Cytoplasmic-facing. Residues 241–261 (WLVVVMTAMSLLVLVLSWGSM) form a helical membrane-spanning segment. Topologically, residues 262–390 (GLEAATAVGL…LRGLCEDALE (129 aa)) are extracellular. Cystine bridges form between Cys275-Cys385 and Cys303-Cys370. 2 N-linked (GlcNAc...) asparagine glycosylation sites follow: Asn284 and Asn355. Residues 391–411 (GLLFLMLFSLLSAGALATTLC) traverse the membrane as a helical segment. Over 412–450 (SLPRAWALFPPSDDYDDTDDDDPFNPQESKRFVQWQSSI) the chain is Cytoplasmic. The tract at residues 428–450 (DTDDDDPFNPQESKRFVQWQSSI) is disordered. Phosphoserine is present on Ser440.

Belongs to the tweety family. Homotetramer; disulfide-linked. Homodimer. N-glycosylated. Contains high-mannose, hybrid and complex oligosaccharides. As to expression, expressed in the astrocytes (at protein level). Restricted mainly to neural tissues. Strongly expressed in brain and eye.

The protein localises to the cell membrane. It catalyses the reaction chloride(in) = chloride(out). The enzyme catalyses L-glutamate(out) = L-glutamate(in). Its activity is regulated as follows. Inhibited by (4-[(2-butyl-6,7-dichloro-2- cyclopentyl-2,3-dihydro-1-oxo-1H-inden-5-yl)oxy]butanoic acid). Its function is as follows. Calcium-independent, swelling-dependent volume-regulated anion channel (VRAC-swell) which plays a pivotal role in the process of regulatory volume decrease (RVD) in the brain through the efflux of anions like chloride and organic osmolytes like glutamate. The polypeptide is Protein tweety homolog 1 (Ttyh1) (Mus musculus (Mouse)).